Consider the following 427-residue polypeptide: GTPase ERA-like, chloroplastic (427 aa).

The transit peptide at 1 to 39 (MAVSPHISPTLSRYKFFSTSVVENPNFSPYRIYSRRRVT) directs the protein to the chloroplast. Residues 128-298 (RSGYVAVVGM…KEWILSKLPF (171 aa)) form the Era-type G domain. The G1 stretch occupies residues 136–143 (GMPNVGKS). 136 to 143 (GMPNVGKS) is a binding site for GTP. Residues 162–166 (QTTRH) are G2. Residues 183–186 (DTPG) are G3. GTP contacts are provided by residues 183–187 (DTPGV) and 248–251 (NKKD). The segment at 248 to 251 (NKKD) is G4. Residues 277–279 (VSA) are G5. The KH type-2 domain occupies 329 to 406 (YRNEVPYACQ…FLEVEVKVKE (78 aa)).

This sequence belongs to the TRAFAC class TrmE-Era-EngA-EngB-Septin-like GTPase superfamily. Era GTPase family.

Its subcellular location is the plastid. The protein localises to the chloroplast stroma. The protein resides in the chloroplast nucleoid. Functionally, nuclear genome-encoded probable GTPase involved in ribosome biogenesis in chloroplasts. Plays a role in 16S rRNA maturation in plastids and may contribute to the assembly of the small (30S) ribosomal subunit. This is GTPase ERA-like, chloroplastic from Arabidopsis thaliana (Mouse-ear cress).